A 134-amino-acid polypeptide reads, in one-letter code: Small ribosomal subunit protein uS11 (134 aa).

The interval 114 to 134 (TPVPHNGTRPPRKWFKRQEKR) is disordered. The segment covering 123-134 (PPRKWFKRQEKR) has biased composition (basic residues).

This sequence belongs to the universal ribosomal protein uS11 family. Part of the 30S ribosomal subunit. Interacts with proteins S7 and S18. Binds to IF-3.

Its function is as follows. Located on the platform of the 30S subunit, it bridges several disparate RNA helices of the 16S rRNA. Forms part of the Shine-Dalgarno cleft in the 70S ribosome. This chain is Small ribosomal subunit protein uS11, found in Mesomycoplasma hyopneumoniae (strain 232) (Mycoplasma hyopneumoniae).